We begin with the raw amino-acid sequence, 28 residues long: Trypsin inhibitor 4 (28 aa).

3 disulfide bridges follow: Cys2–Cys19, Cys9–Cys21, and Cys15–Cys27.

The protein belongs to the protease inhibitor I7 (squash-type serine protease inhibitor) family.

It is found in the secreted. In terms of biological role, inhibits trypsin. The polypeptide is Trypsin inhibitor 4 (Luffa aegyptiaca (Sponge gourd)).